Here is a 277-residue protein sequence, read N- to C-terminus: Formamidopyrimidine-DNA glycosylase (277 aa).

P2 serves as the catalytic Schiff-base intermediate with DNA. The Proton donor role is filled by E3. The active-site Proton donor; for beta-elimination activity is K58. Residues H95, R113, and R158 each coordinate DNA. An FPG-type zinc finger spans residues 243-277 (GVYDRANQPCLRCGGVVRQIRQAGRSTYYCTGCQH). R267 serves as the catalytic Proton donor; for delta-elimination activity.

This sequence belongs to the FPG family. Monomer. Zn(2+) is required as a cofactor.

It carries out the reaction Hydrolysis of DNA containing ring-opened 7-methylguanine residues, releasing 2,6-diamino-4-hydroxy-5-(N-methyl)formamidopyrimidine.. It catalyses the reaction 2'-deoxyribonucleotide-(2'-deoxyribose 5'-phosphate)-2'-deoxyribonucleotide-DNA = a 3'-end 2'-deoxyribonucleotide-(2,3-dehydro-2,3-deoxyribose 5'-phosphate)-DNA + a 5'-end 5'-phospho-2'-deoxyribonucleoside-DNA + H(+). Functionally, involved in base excision repair of DNA damaged by oxidation or by mutagenic agents. Acts as a DNA glycosylase that recognizes and removes damaged bases. Has a preference for oxidized purines, such as 7,8-dihydro-8-oxoguanine (8-oxoG). Has AP (apurinic/apyrimidinic) lyase activity and introduces nicks in the DNA strand. Cleaves the DNA backbone by beta-delta elimination to generate a single-strand break at the site of the removed base with both 3'- and 5'-phosphates. The chain is Formamidopyrimidine-DNA glycosylase from Dechloromonas aromatica (strain RCB).